A 609-amino-acid polypeptide reads, in one-letter code: Glutamine--fructose-6-phosphate aminotransferase [isomerizing] (609 aa).

The Nucleophile; for GATase activity role is filled by cysteine 2. A Glutamine amidotransferase type-2 domain is found at cysteine 2–aspartate 217. 2 consecutive SIS domains span residues alanine 285–alanine 425 and tryptophan 458–proline 599. Catalysis depends on lysine 604, which acts as the For Fru-6P isomerization activity.

In terms of assembly, homodimer.

It is found in the cytoplasm. It catalyses the reaction D-fructose 6-phosphate + L-glutamine = D-glucosamine 6-phosphate + L-glutamate. In terms of biological role, catalyzes the first step in hexosamine metabolism, converting fructose-6P into glucosamine-6P using glutamine as a nitrogen source. This chain is Glutamine--fructose-6-phosphate aminotransferase [isomerizing], found in Xylella fastidiosa (strain 9a5c).